The primary structure comprises 217 residues: Pyridoxine/pyridoxamine 5'-phosphate oxidase (217 aa).

Residues 13-16 (RRDY) and Lys71 each bind substrate. FMN contacts are provided by residues 66–71 (RIVLLK), 81–82 (YT), Lys88, and Gln110. Positions 128, 132, and 136 each coordinate substrate. FMN contacts are provided by residues 145-146 (QS) and Trp190. Position 196 to 198 (196 to 198 (RLH)) interacts with substrate. FMN is bound at residue Arg200.

This sequence belongs to the pyridoxamine 5'-phosphate oxidase family. In terms of assembly, homodimer. It depends on FMN as a cofactor.

It carries out the reaction pyridoxamine 5'-phosphate + O2 + H2O = pyridoxal 5'-phosphate + H2O2 + NH4(+). It catalyses the reaction pyridoxine 5'-phosphate + O2 = pyridoxal 5'-phosphate + H2O2. It participates in cofactor metabolism; pyridoxal 5'-phosphate salvage; pyridoxal 5'-phosphate from pyridoxamine 5'-phosphate: step 1/1. The protein operates within cofactor metabolism; pyridoxal 5'-phosphate salvage; pyridoxal 5'-phosphate from pyridoxine 5'-phosphate: step 1/1. Catalyzes the oxidation of either pyridoxine 5'-phosphate (PNP) or pyridoxamine 5'-phosphate (PMP) into pyridoxal 5'-phosphate (PLP). In Edwardsiella ictaluri (strain 93-146), this protein is Pyridoxine/pyridoxamine 5'-phosphate oxidase.